The following is a 35-amino-acid chain: Cupiennin-1c (35 aa).

E35 bears the Glutamic acid 1-amide mark.

Expressed by the venom gland.

The protein localises to the secreted. Functionally, has antimicrobial activity against E.coli, E.faecalis, P.aeruginosa, and S.aureus. This chain is Cupiennin-1c, found in Cupiennius salei (American wandering spider).